Consider the following 544-residue polypeptide: Phosphoenolpyruvate carboxykinase (ATP) (544 aa).

246–253 (GLSGTGKT) contributes to the ATP binding site.

It belongs to the phosphoenolpyruvate carboxykinase (ATP) family.

It carries out the reaction oxaloacetate + ATP = phosphoenolpyruvate + ADP + CO2. Its pathway is carbohydrate biosynthesis; gluconeogenesis. This chain is Phosphoenolpyruvate carboxykinase (ATP) (PCK1), found in Candida glabrata (strain ATCC 2001 / BCRC 20586 / JCM 3761 / NBRC 0622 / NRRL Y-65 / CBS 138) (Yeast).